Reading from the N-terminus, the 122-residue chain is Large ribosomal subunit protein uL18 (122 aa).

Belongs to the universal ribosomal protein uL18 family. Part of the 50S ribosomal subunit; part of the 5S rRNA/L5/L18/L25 subcomplex. Contacts the 5S and 23S rRNAs.

Its function is as follows. This is one of the proteins that bind and probably mediate the attachment of the 5S RNA into the large ribosomal subunit, where it forms part of the central protuberance. The chain is Large ribosomal subunit protein uL18 from Mycobacterium ulcerans (strain Agy99).